We begin with the raw amino-acid sequence, 308 residues long: Aspartate carbamoyltransferase catalytic subunit (308 aa).

Carbamoyl phosphate-binding residues include Arg57 and Thr58. Residue Lys86 participates in L-aspartate binding. Carbamoyl phosphate-binding residues include Arg107, His135, and Gln138. The L-aspartate site is built by Arg167 and Arg228. Carbamoyl phosphate is bound by residues Leu267 and Pro268.

It belongs to the aspartate/ornithine carbamoyltransferase superfamily. ATCase family. Heterooligomer of catalytic and regulatory chains.

The catalysed reaction is carbamoyl phosphate + L-aspartate = N-carbamoyl-L-aspartate + phosphate + H(+). Its pathway is pyrimidine metabolism; UMP biosynthesis via de novo pathway; (S)-dihydroorotate from bicarbonate: step 2/3. In terms of biological role, catalyzes the condensation of carbamoyl phosphate and aspartate to form carbamoyl aspartate and inorganic phosphate, the committed step in the de novo pyrimidine nucleotide biosynthesis pathway. In Methanococcoides burtonii (strain DSM 6242 / NBRC 107633 / OCM 468 / ACE-M), this protein is Aspartate carbamoyltransferase catalytic subunit.